The primary structure comprises 544 residues: Apolipoprotein N-acyltransferase 1 (544 aa).

The next 6 helical transmembrane spans lie at L30–L50, F57–F79, K91–S111, F115–G135, I157–F177, and P197–I217. The CN hydrolase domain maps to A225 to V501. E272 acts as the Proton acceptor in catalysis. K360 is a catalytic residue. C412 functions as the Nucleophile in the catalytic mechanism. A helical transmembrane segment spans residues G514 to I534.

Belongs to the CN hydrolase family. Apolipoprotein N-acyltransferase subfamily.

The protein resides in the cell inner membrane. The enzyme catalyses N-terminal S-1,2-diacyl-sn-glyceryl-L-cysteinyl-[lipoprotein] + a glycerophospholipid = N-acyl-S-1,2-diacyl-sn-glyceryl-L-cysteinyl-[lipoprotein] + a 2-acyl-sn-glycero-3-phospholipid + H(+). It functions in the pathway protein modification; lipoprotein biosynthesis (N-acyl transfer). Its function is as follows. Catalyzes the phospholipid dependent N-acylation of the N-terminal cysteine of apolipoprotein, the last step in lipoprotein maturation. The protein is Apolipoprotein N-acyltransferase 1 of Treponema denticola (strain ATCC 35405 / DSM 14222 / CIP 103919 / JCM 8153 / KCTC 15104).